Reading from the N-terminus, the 268-residue chain is MKLFGWMQNKLNGKQGNKKPNTVPITTHPAKQEPREEFSDWPHGLLAIGTFGNNDLKENAAESQDIQEDPTSSEEILDNFTPEEVGKLHKELTKLLTRKPNIEKEIADLPLDRFLNCPSSLEVDRRNSNALCSDSADDHKDEDIEKTISVILGRCKEICGDKNKKAIGKKSISFLLKKMFVCRSGFAPQPSLRDTLQESRMEKLLRVMLNKKIINPQGSSRAASMKKYLEDRQIPTKKESNTEDDTKEKINNGCKWVKTDSEYIVLEI.

Positions 11-21 (LNGKQGNKKPN) are enriched in low complexity. The interval 11–39 (LNGKQGNKKPNTVPITTHPAKQEPREEFS) is disordered. Residues 30–39 (AKQEPREEFS) show a composition bias toward basic and acidic residues. The short motif at 44–50 (GLLAIGT) is the IGT motif element. Positions 220-246 (SRAASMKKYLEDRQIPTKKESNTEDDT) are disordered. Residues 227–246 (KYLEDRQIPTKKESNTEDDT) show a composition bias toward basic and acidic residues.

This sequence belongs to the LAZY family. Expressed in roots.

Involved in the development of the root system architecture by influencing lateral root angles and primary root length. The chain is Protein DEEPER ROOTING 1 from Prunus persica (Peach).